We begin with the raw amino-acid sequence, 247 residues long: Opacity protein opA52 (247 aa).

Ala1 is a signal peptide.

It belongs to the opacity porin family.

The protein localises to the cell outer membrane. Implicated in a number of adherence functions. OPA proteins are implicated in pathogenesis and are subject to phase variation. The polypeptide is Opacity protein opA52 (opaG) (Neisseria gonorrhoeae).